A 541-amino-acid polypeptide reads, in one-letter code: Membrane protein insertase YidC (541 aa).

6 consecutive transmembrane segments (helical) span residues 6 to 26 (NILL…WQAD), 325 to 345 (LVVD…LLMF), 349 to 369 (FVGN…GLLF), 420 to 440 (GGCL…WVLL), 457 to 477 (LSVQ…MFVM), and 500 to 520 (VIFT…WLVG).

This sequence belongs to the OXA1/ALB3/YidC family. Type 1 subfamily. Interacts with the Sec translocase complex via SecD. Specifically interacts with transmembrane segments of nascent integral membrane proteins during membrane integration.

It localises to the cell inner membrane. In terms of biological role, required for the insertion and/or proper folding and/or complex formation of integral membrane proteins into the membrane. Involved in integration of membrane proteins that insert both dependently and independently of the Sec translocase complex, as well as at least some lipoproteins. Aids folding of multispanning membrane proteins. The polypeptide is Membrane protein insertase YidC (Shewanella baltica (strain OS223)).